Reading from the N-terminus, the 647-residue chain is MAKVTDIVLWDKPGERVLLLGNHAIARGALEANIAVFAAYPGTPSSELTDTMAAVAKKAGVYMEYSTNEKVAFETALAAAWSGLRAMTAMKHVGLNVAADSFLSSVGMGVEGGFVIMVADDPSMWSSQNEQDTRVYAKFANVPVLEPSSPHEAKEMTKYAFELSEKFKHFVILRTTTRSSHARGDVVLGELPEEIKTGKRKFGKFKKDPTRFVDVPAHARKFHPLILEKIEKIREELNNCPFNWIEGKEDAKVGIIAPGLSYAYVKEALAWLGVEDVKILKLGTPFPVPYGLLGKFFDGLEKVLIVEELEPVVEEQVKTWAYDKGLRIPIHGKDLVPRVYEMTTRRAVEAIAKFLGLETPINFAEIDEKYEKVSQIVPPRPPSLCPACPHRNSFFAIRKAAGPKAIYPSDIGCYTLGVLPPLRTVDTTVAMGASIGIGHGLSIAMNGSLAEEEHKEGKEKQIIVATIGDSTFYHTGLPALANAIYNRSNVLIVVLDNLVTAMTGDQPNPGTGQTPHGMGKRIPIEDVAKAMGADFVAVVDPYDIKATYETIKKALEVEGVSVVVSRQVCALYKIGQMRRRGMKWPIYHVVEDKCTGCKICINAYGCPAIYWDPETKKAKVDPTMCWGCGGCAQVCPFDAFEPMKEGE.

2 consecutive 4Fe-4S ferredoxin-type domains span residues 585–614 and 616–645; these read PIYH…WDPE and KKAK…PMKE. The [4Fe-4S] cluster site is built by Cys-594, Cys-597, Cys-600, Cys-606, Cys-625, Cys-628, Cys-631, and Cys-635.

In terms of assembly, heterodimer of the IorA and IorB subunits. It depends on [4Fe-4S] cluster as a cofactor.

The enzyme catalyses indole-3-pyruvate + 2 oxidized [2Fe-2S]-[ferredoxin] + CoA = (indol-3-yl)acetyl-CoA + 2 reduced [2Fe-2S]-[ferredoxin] + CO2 + H(+). Its function is as follows. Catalyzes the ferredoxin-dependent oxidative decarboxylation of arylpyruvates. This is Indolepyruvate oxidoreductase subunit IorA (iorA) from Thermococcus kodakarensis (strain ATCC BAA-918 / JCM 12380 / KOD1) (Pyrococcus kodakaraensis (strain KOD1)).